Reading from the N-terminus, the 124-residue chain is Fluoride-specific ion channel FluC (124 aa).

The next 3 helical transmembrane spans lie at 20–40, 60–80, and 102–122; these read LLSI…TLLV, ISPE…TTFS, and VLLN…LIFS. 2 residues coordinate Na(+): Gly-74 and Thr-77.

Belongs to the fluoride channel Fluc/FEX (TC 1.A.43) family.

The protein resides in the cell inner membrane. The catalysed reaction is fluoride(in) = fluoride(out). Its activity is regulated as follows. Na(+) is not transported, but it plays an essential structural role and its presence is essential for fluoride channel function. Fluoride-specific ion channel. Important for reducing fluoride concentration in the cell, thus reducing its toxicity. The protein is Fluoride-specific ion channel FluC of Shewanella frigidimarina (strain NCIMB 400).